The following is a 510-amino-acid chain: Light-independent protochlorophyllide reductase subunit B (510 aa).

D36 is a [4Fe-4S] cluster binding site. The active-site Proton donor is D296. 431–432 (GM) serves as a coordination point for substrate.

The protein belongs to the ChlB/BchB/BchZ family. Protochlorophyllide reductase is composed of three subunits; ChlL, ChlN and ChlB. Forms a heterotetramer of two ChlB and two ChlN subunits. Requires [4Fe-4S] cluster as cofactor.

The enzyme catalyses chlorophyllide a + oxidized 2[4Fe-4S]-[ferredoxin] + 2 ADP + 2 phosphate = protochlorophyllide a + reduced 2[4Fe-4S]-[ferredoxin] + 2 ATP + 2 H2O. It participates in porphyrin-containing compound metabolism; chlorophyll biosynthesis (light-independent). Its function is as follows. Component of the dark-operative protochlorophyllide reductase (DPOR) that uses Mg-ATP and reduced ferredoxin to reduce ring D of protochlorophyllide (Pchlide) to form chlorophyllide a (Chlide). This reaction is light-independent. The NB-protein (ChlN-ChlB) is the catalytic component of the complex. This is Light-independent protochlorophyllide reductase subunit B from Synechococcus sp. (strain JA-3-3Ab) (Cyanobacteria bacterium Yellowstone A-Prime).